A 78-amino-acid polypeptide reads, in one-letter code: Calcium/calmodulin-dependent protein kinase II inhibitor 1 (78 aa).

The tract at residues 41-68 is CAMK2 inhibitory domain; it reads NKRPPKLGQIGRSKRVVIEDDRIDDVLK.

The protein belongs to the CAMK2N family. Interacts with CAMK2B; the presence of Ca(2+)/calmodulin increases the interaction but is not essential. Interacts with CAMK2A; this interaction requires CAMK2A activation by Ca(2+).

It is found in the synapse. The protein localises to the cell projection. The protein resides in the dendrite. Its subcellular location is the postsynaptic density. Potent and specific inhibitor of CaM-kinase II (CAMK2). Plays a role in the maintenance of long-term retrieval-induced memory in response to contextual fear. Modulates blood pressure and vascular reactivity via regulation of CAMK2 activity in addition to regulation of left ventricular mass. Mediates the NLRP3 inflammasome in cardiomyocytes via acting as an inhibitor of the MAPK14/p38 and MAPK8/JNK pathways, thereby regulating ventricular remodeling and cardiac rhythm post-myocardial infarction. Negatively effects insulin sensitivity and promotes lipid formation in adipose tissues independent of CAMK2 signaling. The polypeptide is Calcium/calmodulin-dependent protein kinase II inhibitor 1 (CAMK2N1) (Homo sapiens (Human)).